We begin with the raw amino-acid sequence, 115 residues long: Viral Lymphotactin (115 aa).

Positions 1–19 (MRLLTILALCCVAIWVVES) are cleaved as a signal peptide. Cysteine 30 and cysteine 67 are joined by a disulfide.

Belongs to the intercrine gamma family. Interacts with host XCR1. In terms of processing, N-glycosylated and O-glycosylated.

It is found in the secreted. Functionally, chemoattractant for CD4-dendritic cells, but not for CD4+ dendritic cells, T-cells or B-cells. This is Viral Lymphotactin (vXCL1) from Rat cytomegalovirus (isolate England) (RCMV-E).